Reading from the N-terminus, the 145-residue chain is uncharacterized protein (145 aa).

A run of 4 helical transmembrane segments spans residues 1–21 (MELF…YFLI), 28–48 (TVLI…MGAL), 54–74 (SMTS…AYVM), and 96–116 (FFLI…IPSA).

It belongs to the DcuC/DcuD transporter (TC 2.A.61) family.

Its subcellular location is the cell membrane. This is an uncharacterized protein from Haemophilus influenzae (strain ATCC 51907 / DSM 11121 / KW20 / Rd).